The following is a 96-amino-acid chain: MADEKPKEGVKTENNDHINLKVAGQDGSVVQFKIKRHTPLSKLMKAYCERQGLTMRQIRFRFDGQPINETDTPAQLEMEDEDTIDVFQQQTGGHRI.

Lysine 11 is covalently cross-linked (Glycyl lysine isopeptide (Lys-Gly) (interchain with G-Cter in SUMO)). In terms of domain architecture, Ubiquitin-like spans 16-96 (DHINLKVAGQ…FQQQTGGHRI (81 aa)). Glycine 93 is covalently cross-linked (Glycyl lysine isopeptide (Gly-Lys) (interchain with K-? in acceptor proteins)). Residues 94–96 (HRI) constitute a propeptide that is removed on maturation.

It belongs to the ubiquitin family. SUMO subfamily. Interacts with sae2 and ube2i. Covalently attached to a number of proteins. Post-translationally, polymeric chains can be formed through Lys-11 cross-linking. In terms of processing, cleavage of precursor form by a sentrin-specific protease is necessary for function.

The protein localises to the nucleus. In terms of biological role, ubiquitin-like protein that can be covalently attached to proteins as a monomer or as a lysine-linked polymer. Covalent attachment via an isopeptide bond to its substrates requires prior activation by the E1 complex sae1-sae2 and linkage to the E2 enzyme ube2i, and can be promoted by an E3 ligase such as pias1-4. This post-translational modification on lysine residues of proteins plays a crucial role in a number of cellular processes such as nuclear transport, DNA replication and repair, mitosis and signal transduction. Polymeric sumo2 chains are also susceptible to polyubiquitination which functions as a signal for proteasomal degradation of modified proteins. The chain is Small ubiquitin-related modifier 2 from Danio rerio (Zebrafish).